We begin with the raw amino-acid sequence, 141 residues long: VLSPADKTNVKAAWGKVGGHGGEYGAEALERMFLSFPTTKTYFPHFDLSHGSAQVKGHGKKVADALTNAVAHVDDMPHALSALSDLHAHKLRVDPVNFKLLSHCLLVTLAAHLPAEFTPAVHASLDKFLASVSTVLTSKYR.

The 141-residue stretch at 1–141 (VLSPADKTNV…VSTVLTSKYR (141 aa)) folds into the Globin domain. S3 carries the phosphoserine modification. K7 bears the N6-succinyllysine mark. Residue T8 is modified to Phosphothreonine. N6-succinyllysine is present on K11. K16 bears the N6-acetyllysine; alternate mark. K16 carries the N6-succinyllysine; alternate modification. Y24 is modified (phosphotyrosine). S35 carries the phosphoserine modification. An N6-succinyllysine modification is found at K40. S49 carries the post-translational modification Phosphoserine. O2 is bound at residue H58. Residue H87 coordinates heme b. Position 102 is a phosphoserine (S102). T108 is modified (phosphothreonine). A phosphoserine mark is found at S124 and S131. Residues T134 and T137 each carry the phosphothreonine modification. Phosphoserine is present on S138.

The protein belongs to the globin family. In terms of assembly, heterotetramer of two alpha chains and two beta chains. In terms of tissue distribution, red blood cells.

Involved in oxygen transport from the lung to the various peripheral tissues. Functionally, hemopressin acts as an antagonist peptide of the cannabinoid receptor CNR1. Hemopressin-binding efficiently blocks cannabinoid receptor CNR1 and subsequent signaling. The sequence is that of Hemoglobin subunit alpha (HBA) from Semnopithecus entellus (Northern plains gray langur).